Reading from the N-terminus, the 540-residue chain is Putative rhamnogalacturonase (540 aa).

The N-terminal stretch at 1–23 (MGFLTLFHMAFLAVSLFVSGALA) is a signal peptide. 2 disulfide bridges follow: Cys-53–Cys-100 and Cys-192–Cys-203. A glycan (N-linked (GlcNAc...) asparagine) is linked at Asn-89. N-linked (GlcNAc...) asparagine glycosylation occurs at Asn-368.

It belongs to the polysaccharide lyase 4 family.

Its subcellular location is the secreted. It carries out the reaction Endotype eliminative cleavage of L-alpha-rhamnopyranosyl-(1-&gt;4)-alpha-D-galactopyranosyluronic acid bonds of rhamnogalacturonan I domains in ramified hairy regions of pectin leaving L-rhamnopyranose at the reducing end and 4-deoxy-4,5-unsaturated D-galactopyranosyluronic acid at the non-reducing end.. Its function is as follows. Could be a pectinolytic enzyme that hydrolyzes the alpha-L-rhamnopyranosyl-(1,4)-alpha-D-galacturonopyranosyl glycosidic linkage by beta-elimination, thereby generating oligosaccharides terminating at the non-reducing end with a hex-4-enopyranosyluronic acid residue. The chain is Putative rhamnogalacturonase (asd-1) from Neurospora crassa (strain ATCC 24698 / 74-OR23-1A / CBS 708.71 / DSM 1257 / FGSC 987).